The chain runs to 595 residues: Arginine--tRNA ligase (595 aa).

The 'HIGH' region motif lies at 132–142 (ANPTGPLHVGH).

The protein belongs to the class-I aminoacyl-tRNA synthetase family. As to quaternary structure, monomer.

It is found in the cytoplasm. The catalysed reaction is tRNA(Arg) + L-arginine + ATP = L-arginyl-tRNA(Arg) + AMP + diphosphate. The chain is Arginine--tRNA ligase from Cupriavidus taiwanensis (strain DSM 17343 / BCRC 17206 / CCUG 44338 / CIP 107171 / LMG 19424 / R1) (Ralstonia taiwanensis (strain LMG 19424)).